Consider the following 242-residue polypeptide: Intraflagellar transport-associated protein (242 aa).

Phosphoserine is present on Ser57.

Interacts with IFT122; the interaction associates IFTAP with IFT-A complex.

In terms of biological role, seems to play a role in ciliary BBSome localization, maybe through interaction with IFT-A complex. The polypeptide is Intraflagellar transport-associated protein (IFTAP) (Bos taurus (Bovine)).